The chain runs to 117 residues: UPF0344 protein GK0697 (117 aa).

4 consecutive transmembrane segments (helical) span residues 1-21 (MTHA…LAVS), 39-59 (LFYI…ASIS), 60-80 (ALYW…EMVL), and 97-117 (VIAL…FDLF).

Belongs to the UPF0344 family.

It localises to the cell membrane. This chain is UPF0344 protein GK0697, found in Geobacillus kaustophilus (strain HTA426).